Reading from the N-terminus, the 30-residue chain is Snaclec carinactivase-1 regulatory subunit 17 kDa chain (30 aa).

The C-type lectin domain maps to D1 to C30. Cysteines 2 and 13 form a disulfide.

It belongs to the snaclec family. Heterodimer of a metalloproteinase subunit and a regulatory subunit comprising two polypeptides disulfide-linked (14 kDa and 17 kDa chains). In terms of tissue distribution, expressed by the venom gland.

Its subcellular location is the secreted. Calcium-dependent prothrombin activator. This protein may activate prothrombin via recognition by the regulatory subunit of the calcium ion bound conformation of its gamma-carboxyglutamic acid (GLA) domain, and the subsequent conversion of prothrombin to active thrombin is catalyzed by the catalytic subunit. The protein is Snaclec carinactivase-1 regulatory subunit 17 kDa chain of Echis carinatus (Saw-scaled viper).